A 149-amino-acid chain; its full sequence is Urease accessory protein UreE (149 aa).

The protein belongs to the UreE family.

It localises to the cytoplasm. Its function is as follows. Involved in urease metallocenter assembly. Binds nickel. Probably functions as a nickel donor during metallocenter assembly. In Ruegeria pomeroyi (strain ATCC 700808 / DSM 15171 / DSS-3) (Silicibacter pomeroyi), this protein is Urease accessory protein UreE.